The chain runs to 239 residues: Uridylate kinase (239 aa).

13 to 16 (KVSG) contributes to the ATP binding site. G55 provides a ligand contact to UMP. Residues G56 and R60 each contribute to the ATP site. UMP is bound by residues D75 and 136–143 (TGNPFFTT). 4 residues coordinate ATP: T163, Q164, Y169, and D172.

Belongs to the UMP kinase family. Homohexamer.

It is found in the cytoplasm. The enzyme catalyses UMP + ATP = UDP + ADP. The protein operates within pyrimidine metabolism; CTP biosynthesis via de novo pathway; UDP from UMP (UMPK route): step 1/1. With respect to regulation, inhibited by UTP. Its function is as follows. Catalyzes the reversible phosphorylation of UMP to UDP. This chain is Uridylate kinase, found in Bartonella henselae (strain ATCC 49882 / DSM 28221 / CCUG 30454 / Houston 1) (Rochalimaea henselae).